We begin with the raw amino-acid sequence, 510 residues long: Secreted RxLR effector protein 24 (510 aa).

The N-terminal stretch at 1–18 (MRGAFYVAIALLGSHTAA) is a signal peptide. The RxLR-dEER motif lies at 47-68 (RVLRERRDSKDKLTVHAGAEER).

It belongs to the RxLR effector family.

The protein resides in the secreted. It is found in the host nucleus. In terms of biological role, secreted effector that acts as an elicitor that induces cell death in host plant cells. The protein is Secreted RxLR effector protein 24 of Plasmopara viticola (Downy mildew of grapevine).